We begin with the raw amino-acid sequence, 116 residues long: Chorion protein S15 (116 aa).

Residues Met-1–Ala-18 form the signal peptide.

This sequence belongs to the chorion protein S15/S18 family.

Its subcellular location is the secreted. Functionally, chorion membrane (egg shell) protein; plays a role in protecting the egg from the environment. This is Chorion protein S15 (Cp15) from Drosophila virilis (Fruit fly).